The sequence spans 270 residues: 5'-AMP-activated protein kinase subunit beta-1 (270 aa).

The interval 1–44 (MGNTSSERAALERQAGHKTPRRDSSGGAKDGDRPKILMDSPEDA) is disordered. Residue G2 is the site of N-myristoyl glycine attachment. T4 is modified (phosphothreonine). S5 and S6 each carry phosphoserine. Positions 9-36 (AALERQAGHKTPRRDSSGGAKDGDRPKI) are enriched in basic and acidic residues. A Phosphothreonine modification is found at T19. Phosphoserine; by autocatalysis occurs at positions 24 and 25. Residues S40, S96, and S101 each carry the phosphoserine modification. Residues 68 to 163 (EANDKAPAQA…QVKKTDFEVF (96 aa)) are glycogen-binding domain. S108 is modified (phosphoserine; by autocatalysis). Phosphothreonine is present on T148. S182 carries the post-translational modification Phosphoserine. An N6-succinyllysine modification is found at K201.

Belongs to the 5'-AMP-activated protein kinase beta subunit family. AMPK is a heterotrimer of an alpha catalytic subunit (PRKAA1 or PRKAA2), a beta (PRKAB1 or PRKAB2) and a gamma non-catalytic subunits (PRKAG1, PRKAG2 or PRKAG3). Interacts with FNIP1 and FNIP2. Post-translationally, phosphorylated when associated with the catalytic subunit (PRKAA1 or PRKAA2). Phosphorylated by ULK1; leading to negatively regulate AMPK activity and suggesting the existence of a regulatory feedback loop between ULK1 and AMPK.

In terms of biological role, non-catalytic subunit of AMP-activated protein kinase (AMPK), an energy sensor protein kinase that plays a key role in regulating cellular energy metabolism. In response to reduction of intracellular ATP levels, AMPK activates energy-producing pathways and inhibits energy-consuming processes: inhibits protein, carbohydrate and lipid biosynthesis, as well as cell growth and proliferation. AMPK acts via direct phosphorylation of metabolic enzymes, and by longer-term effects via phosphorylation of transcription regulators. Also acts as a regulator of cellular polarity by remodeling the actin cytoskeleton; probably by indirectly activating myosin. Beta non-catalytic subunit acts as a scaffold on which the AMPK complex assembles, via its C-terminus that bridges alpha (PRKAA1 or PRKAA2) and gamma subunits (PRKAG1, PRKAG2 or PRKAG3). This Mus musculus (Mouse) protein is 5'-AMP-activated protein kinase subunit beta-1 (Prkab1).